We begin with the raw amino-acid sequence, 273 residues long: 4-hydroxy-tetrahydrodipicolinate reductase (273 aa).

Residues 12-17 (GAGGRM) and Glu-38 contribute to the NAD(+) site. Arg-39 contributes to the NADP(+) binding site. Residues 102–104 (GTT) and 126–129 (AANF) each bind NAD(+). His-159 (proton donor/acceptor) is an active-site residue. His-160 lines the (S)-2,3,4,5-tetrahydrodipicolinate pocket. The active-site Proton donor is the Lys-163. 169–170 (GT) is a binding site for (S)-2,3,4,5-tetrahydrodipicolinate.

It belongs to the DapB family. As to quaternary structure, homotetramer.

It localises to the cytoplasm. It catalyses the reaction (S)-2,3,4,5-tetrahydrodipicolinate + NAD(+) + H2O = (2S,4S)-4-hydroxy-2,3,4,5-tetrahydrodipicolinate + NADH + H(+). It carries out the reaction (S)-2,3,4,5-tetrahydrodipicolinate + NADP(+) + H2O = (2S,4S)-4-hydroxy-2,3,4,5-tetrahydrodipicolinate + NADPH + H(+). Its pathway is amino-acid biosynthesis; L-lysine biosynthesis via DAP pathway; (S)-tetrahydrodipicolinate from L-aspartate: step 4/4. In terms of biological role, catalyzes the conversion of 4-hydroxy-tetrahydrodipicolinate (HTPA) to tetrahydrodipicolinate. The protein is 4-hydroxy-tetrahydrodipicolinate reductase of Photorhabdus laumondii subsp. laumondii (strain DSM 15139 / CIP 105565 / TT01) (Photorhabdus luminescens subsp. laumondii).